A 281-amino-acid chain; its full sequence is Fructose-bisphosphate aldolase class 1 (281 aa).

The active-site Schiff-base intermediate with dihydroxyacetone-P is lysine 191.

It belongs to the DeoC/FbaB aldolase family. As to quaternary structure, homooctamer.

The protein localises to the cytoplasm. It carries out the reaction beta-D-fructose 1,6-bisphosphate = D-glyceraldehyde 3-phosphate + dihydroxyacetone phosphate. Activated by citrate. This Pyrococcus abyssi (strain GE5 / Orsay) protein is Fructose-bisphosphate aldolase class 1 (fba).